Consider the following 641-residue polypeptide: Protein zwilch (641 aa).

Phosphoserine is present on Ser-312.

It belongs to the ZWILCH family. In terms of assembly, component of the RZZ complex composed of rod, Zw10 and Zwilch.

It localises to the cytoplasm. The protein localises to the chromosome. Its subcellular location is the centromere. The protein resides in the kinetochore. It is found in the cytoskeleton. It localises to the spindle. Essential component of the mitotic checkpoint, which prevents cells from prematurely exiting mitosis. Required for the assembly of the dynein-dynactin, Mad2 complexes and spindly/CG15415 onto kinetochores. Its function related to the spindle assembly machinery is proposed to depend on its association in the RZZ complex. Failure to assemble the complex due to the absence of any one of its components, results in the incorrect redistribution of the remaining components to diverse membrane compartments. The protein is Protein zwilch of Drosophila melanogaster (Fruit fly).